The chain runs to 502 residues: ATP synthase subunit alpha (502 aa).

A disordered region spans residues 115 to 135; it reads VDGLGPINTTNTRPIESPAPG. 169 to 176 serves as a coordination point for ATP; the sequence is GDRQTGKT.

The protein belongs to the ATPase alpha/beta chains family. As to quaternary structure, F-type ATPases have 2 components, CF(1) - the catalytic core - and CF(0) - the membrane proton channel. CF(1) has five subunits: alpha(3), beta(3), gamma(1), delta(1), epsilon(1). CF(0) has three main subunits: a(1), b(2) and c(9-12). The alpha and beta chains form an alternating ring which encloses part of the gamma chain. CF(1) is attached to CF(0) by a central stalk formed by the gamma and epsilon chains, while a peripheral stalk is formed by the delta and b chains.

The protein resides in the cell membrane. It carries out the reaction ATP + H2O + 4 H(+)(in) = ADP + phosphate + 5 H(+)(out). Functionally, produces ATP from ADP in the presence of a proton gradient across the membrane. The alpha chain is a regulatory subunit. The sequence is that of ATP synthase subunit alpha from Bacillus mycoides (strain KBAB4) (Bacillus weihenstephanensis).